A 213-amino-acid polypeptide reads, in one-letter code: Pyridoxine/pyridoxamine 5'-phosphate oxidase 2 (213 aa).

Residues 9 to 12 and Lys67 contribute to the substrate site; that span reads RQRY. FMN-binding positions include 62–67, 77–78, Lys84, and Gln106; these read RTVLLK and FT. Substrate is bound by residues Tyr124, Arg128, and Ser132. Residues 141–142 and Trp186 contribute to the FMN site; that span reads QS. 192–194 is a binding site for substrate; that stretch reads RLH. Arg196 is a binding site for FMN.

This sequence belongs to the pyridoxamine 5'-phosphate oxidase family. Homodimer. FMN is required as a cofactor.

The catalysed reaction is pyridoxamine 5'-phosphate + O2 + H2O = pyridoxal 5'-phosphate + H2O2 + NH4(+). It carries out the reaction pyridoxine 5'-phosphate + O2 = pyridoxal 5'-phosphate + H2O2. It participates in cofactor metabolism; pyridoxal 5'-phosphate salvage; pyridoxal 5'-phosphate from pyridoxamine 5'-phosphate: step 1/1. It functions in the pathway cofactor metabolism; pyridoxal 5'-phosphate salvage; pyridoxal 5'-phosphate from pyridoxine 5'-phosphate: step 1/1. Its function is as follows. Catalyzes the oxidation of either pyridoxine 5'-phosphate (PNP) or pyridoxamine 5'-phosphate (PMP) into pyridoxal 5'-phosphate (PLP). This is Pyridoxine/pyridoxamine 5'-phosphate oxidase 2 from Hydrogenovibrio crunogenus (strain DSM 25203 / XCL-2) (Thiomicrospira crunogena).